The chain runs to 331 residues: Probable allantoicase (331 aa).

The protein belongs to the allantoicase family.

It carries out the reaction allantoate + H2O = (S)-ureidoglycolate + urea. The protein operates within nitrogen metabolism; (S)-allantoin degradation; (S)-ureidoglycolate from allantoate (aminidohydrolase route): step 1/1. The chain is Probable allantoicase from Pseudomonas fluorescens (strain Pf0-1).